Here is a 113-residue protein sequence, read N- to C-terminus: Translation initiation factor 1A (113 aa).

One can recognise an S1-like domain in the interval 12–87 (EVIRVPLPEG…KRGDIVYRYT (76 aa)).

The protein belongs to the eIF-1A family.

Seems to be required for maximal rate of protein biosynthesis. Enhances ribosome dissociation into subunits and stabilizes the binding of the initiator Met-tRNA(I) to 40 S ribosomal subunits. The protein is Translation initiation factor 1A (eIF1A) of Pyrococcus abyssi (strain GE5 / Orsay).